The sequence spans 235 residues: Ubiquinone/menaquinone biosynthesis C-methyltransferase UbiE (235 aa).

Residues Thr60, Asp81, and Ser126 each contribute to the S-adenosyl-L-methionine site.

Belongs to the class I-like SAM-binding methyltransferase superfamily. MenG/UbiE family.

The catalysed reaction is a 2-demethylmenaquinol + S-adenosyl-L-methionine = a menaquinol + S-adenosyl-L-homocysteine + H(+). It catalyses the reaction a 2-methoxy-6-(all-trans-polyprenyl)benzene-1,4-diol + S-adenosyl-L-methionine = a 5-methoxy-2-methyl-3-(all-trans-polyprenyl)benzene-1,4-diol + S-adenosyl-L-homocysteine + H(+). It functions in the pathway quinol/quinone metabolism; menaquinone biosynthesis; menaquinol from 1,4-dihydroxy-2-naphthoate: step 2/2. It participates in cofactor biosynthesis; ubiquinone biosynthesis. Methyltransferase required for the conversion of demethylmenaquinol (DMKH2) to menaquinol (MKH2) and the conversion of 2-polyprenyl-6-methoxy-1,4-benzoquinol (DDMQH2) to 2-polyprenyl-3-methyl-6-methoxy-1,4-benzoquinol (DMQH2). This chain is Ubiquinone/menaquinone biosynthesis C-methyltransferase UbiE, found in Geobacter sp. (strain M21).